The primary structure comprises 230 residues: Flagellar L-ring protein (230 aa).

The N-terminal stretch at 1-18 (MNRLNIAVSCLATALLFG) is a signal peptide. Cysteine 19 carries N-palmitoyl cysteine lipidation. Residue cysteine 19 is the site of S-diacylglycerol cysteine attachment.

It belongs to the FlgH family. In terms of assembly, the basal body constitutes a major portion of the flagellar organelle and consists of four rings (L,P,S, and M) mounted on a central rod.

It localises to the cell outer membrane. The protein localises to the bacterial flagellum basal body. In terms of biological role, assembles around the rod to form the L-ring and probably protects the motor/basal body from shearing forces during rotation. The polypeptide is Flagellar L-ring protein (Legionella pneumophila (strain Paris)).